A 530-amino-acid chain; its full sequence is MSLKWMSVFLLMQLSCYFSSGSCGKVLVWPTEYSHWINMKTILEELVQRGHEVIVLTSSASILVNASKSSAIKLEVYPTSLTKNDLEDFFMKMFDRWTYSISKNTFWSYFSQLQELCWEYSDYNIKLCEDAVLNKKLMRKLQESKFDVLLADAVNPCGELLAELLNIPFLYSLRFSVGYTVEKNGGGFLFPPSYVPVVMSELSDQMIFMERIKNMIYMLYFDFWFQAYDLKKWDQFYSEVLGRPTTLFETMGKAEMWLIRTYWDFEFPRPFLPNVDFVGGLHCKPAKPLPKEMEEFVQSSGENGIVVFSLGSMISNMSEESANMIASALAQIPQKVLWRFDGKKPNTLGSNTRLYKWLPQNDLLGHPKTKAFITHGGTNGIYEAIYHGIPMVGIPLFADQHDNIAHMKAKGAALSVDIRTMSSRDLLNALKSVINDPIYKENIMKLSRIHHDQPVKPLDRAVFWIEFVMRHKGAKHLRVAAHNLTWIQYHSLDVIAFLLACVATMIFMITKCCLFCFRKLAKTGKKKKRD.

The N-terminal stretch at 1–23 (MSLKWMSVFLLMQLSCYFSSGSC) is a signal peptide. Asparagine 65 is a glycosylation site (N-linked (GlcNAc...) asparagine). Lysine 136 bears the N6-succinyllysine mark. 2 N-linked (GlcNAc...) asparagine glycosylation sites follow: asparagine 316 and asparagine 483. A helical transmembrane segment spans residues 495 to 515 (IAFLLACVATMIFMITKCCLF).

It belongs to the UDP-glycosyltransferase family. Expressed in various tissues including the liver, kidney, testis, uterus, placenta, mammary gland, adrenal gland, skin and prostate.

The protein resides in the endoplasmic reticulum membrane. The enzyme catalyses glucuronate acceptor + UDP-alpha-D-glucuronate = acceptor beta-D-glucuronoside + UDP + H(+). It catalyses the reaction 17alpha-estradiol + UDP-alpha-D-glucuronate = 17alpha-estradiol 3-O-(beta-D-glucuronate) + UDP + H(+). It carries out the reaction 17alpha-estradiol + UDP-alpha-D-glucuronate = 17alpha-estradiol 17-O-(beta-D-glucuronate) + UDP + H(+). The catalysed reaction is 17beta-estradiol + UDP-alpha-D-glucuronate = 17beta-estradiol 17-O-(beta-D-glucuronate) + UDP + H(+). The enzyme catalyses 17beta-hydroxy-5alpha-androstan-3-one + UDP-alpha-D-glucuronate = 5alpha-dihydrotestosterone 17-O-(beta-D-glucuronate) + UDP + H(+). It catalyses the reaction testosterone + UDP-alpha-D-glucuronate = testosterone 17-O-(beta-D-glucuronate) + UDP + H(+). In terms of biological role, UDP-glucuronosyltransferase (UGT) that catalyzes phase II biotransformation reactions in which lipophilic substrates are conjugated with glucuronic acid to increase the metabolite's water solubility, thereby facilitating excretion into either the urine or bile. Catalyzes the glucuronidation of endogenous steroid hormones such as androgens (epitestosterone, androsterone) and estrogens (estradiol, epiestradiol). The sequence is that of UDP-glucuronosyltransferase 2B17 from Homo sapiens (Human).